A 139-amino-acid polypeptide reads, in one-letter code: Drosulfakinins (139 aa).

The N-terminal stretch at Met1–Thr35 is a signal peptide. Residues Ala36–Ser71 constitute a propeptide that is removed on maturation. Phe80 is modified (phenylalanine amide). The propeptide occupies Gly81–Ser109. Tyr115 bears the Sulfotyrosine mark. A Phenylalanine amide modification is found at Phe120. Tyr132 bears the Sulfotyrosine mark. Phe137 carries the phenylalanine amide modification.

The protein belongs to the gastrin/cholecystokinin family.

The protein localises to the secreted. Its function is as follows. Drosulfakinin-0 (DSK 0) plays diverse biological roles including regulating gut muscle contraction in adults but not in larvae. This is Drosulfakinins from Drosophila pseudoobscura pseudoobscura (Fruit fly).